A 589-amino-acid chain; its full sequence is ATP-dependent lipid A-core flippase (589 aa).

Transmembrane regions (helical) follow at residues Trp-29–Leu-49, Ala-68–Ile-88, Val-157–Leu-177, Leu-254–Ala-274, and Leu-283–Lys-303. The ABC transmembrane type-1 domain occupies Val-32–Ser-314. The ABC transporter domain maps to Ile-346 to Met-582. Gly-380–Ser-387 contributes to the ATP binding site.

Belongs to the ABC transporter superfamily. Lipid exporter (TC 3.A.1.106) family. As to quaternary structure, homodimer.

It is found in the cell inner membrane. The catalysed reaction is ATP + H2O + lipid A-core oligosaccharideSide 1 = ADP + phosphate + lipid A-core oligosaccharideSide 2.. Functionally, involved in lipopolysaccharide (LPS) biosynthesis. Translocates lipid A-core from the inner to the outer leaflet of the inner membrane. Transmembrane domains (TMD) form a pore in the inner membrane and the ATP-binding domain (NBD) is responsible for energy generation. The sequence is that of ATP-dependent lipid A-core flippase from Xylella fastidiosa (strain 9a5c).